A 428-amino-acid chain; its full sequence is C4-dicarboxylate transport protein (428 aa).

A run of 8 helical transmembrane segments spans residues 8 to 28, 44 to 64, 76 to 96, 142 to 162, 184 to 204, 222 to 242, 326 to 346, and 352 to 372; these read SLYFQVLTAIAIGILLGHFYP, LIKMIIAPVIFCTVVTGIAGM, VALLYFEVVSTIALIIGLIIV, IGAFASGNILQVLLFAVLFGF, VIFGIINMIMRLAPIGAFGAM, LIICFYITCILFVVVVLGSIA, IFHQITLLVVLLLSSKGAAGV, and IVLAATISAVGHLPIAGLALI.

Belongs to the dicarboxylate/amino acid:cation symporter (DAACS) (TC 2.A.23) family.

Its subcellular location is the cell inner membrane. Functionally, responsible for the transport of dicarboxylates such as succinate, fumarate, and malate from the periplasm across the membrane. In Enterobacter sp. (strain 638), this protein is C4-dicarboxylate transport protein.